The primary structure comprises 521 residues: Melanopsin (521 aa).

The Extracellular portion of the chain corresponds to 1-71; that stretch reads MDSPSGPRVL…VDVPDHAHYT (71 aa). N30 and N34 each carry an N-linked (GlcNAc...) asparagine glycan. A helical membrane pass occupies residues 72 to 92; sequence LGTVILLVGLTGMLGNLTVIY. Residues 93–106 lie on the Cytoplasmic side of the membrane; it reads TFCRNRGLRTPANM. The helical transmembrane segment at 107–127 threads the bilayer; it reads FIINLAVSDFLMSVTQAPVFF. The Extracellular segment spans residues 128-143; sequence ASSLYKKWLFGETGCE. C142 and C220 are disulfide-bonded. A helical transmembrane segment spans residues 144-164; it reads FYAFCGAVFGITSMITLTAIA. Residues 165–187 are Cytoplasmic-facing; sequence MDRYLVITRPLATIGRGSKRRTA. Residues 188-208 form a helical membrane-spanning segment; that stretch reads LVLLGVWLYALAWSLPPFFGW. Residues 209–237 lie on the Extracellular side of the membrane; the sequence is SAYVPEGLLTSCSWDYMTFTPQVRAYTML. The helical transmembrane segment at 238–258 threads the bilayer; that stretch reads LFCFVFFLPLLIIIFCYIFIF. The Cytoplasmic portion of the chain corresponds to 259–293; it reads RAIRETGRACEGCGESPLRQRRQWQRLQSEWKMAK. Residues 294–314 traverse the membrane as a helical segment; the sequence is VALIVILLFVLSWAPYSTVAL. Residues 315 to 329 are Extracellular-facing; that stretch reads VAFAGYSHILTPYMS. Residues 330 to 350 traverse the membrane as a helical segment; it reads SVPAVIAKASAIHNPIIYAIT. The residue at position 337 (K337) is an N6-(retinylidene)lysine. The Cytoplasmic portion of the chain corresponds to 351–521; that stretch reads HPKYRVAIAQ…LEDDVTLRHL (171 aa). Residues 445–486 are disordered; it reads GELKASSSPQVQRSKTPKVPGPSTCRPMKGQGARPSSLRGDQ. The segment covering 449–458 has biased composition (polar residues); that stretch reads ASSSPQVQRS.

Belongs to the G-protein coupled receptor 1 family. Opsin subfamily. In terms of tissue distribution, expressed in the retinal pigment epithelium and ganglion cell layer (at protein level). Also expressed in amacrine cell layers of the retina. Weakly expressed in vibrissae, and tail. As to expression, observed with processes in the outer strata of inner plexiform layer (IPL) close to the inner nuclear layer (INL) or is found to be bistratified with processes located both in the inner (ON) or outer (OFF) layers of the IPL (at protein level). A second population of isoform 1 is identified in processes which are confined to the inner layer of the IPL near to the ganglion cell layer (GCL) (at protein level). About 40 times more abundant than isoform 1 in the retina (at protein level). Isoform 2 is involved in processes localized to the outer IPL or is bistratified with processes in both the inner and outer layers of the IPL (at protein level). Isoform 2 is absent in the processes confined only to the inner layer of the IPL (at protein level).

It localises to the cell membrane. The protein resides in the cell projection. The protein localises to the axon. It is found in the dendrite. Its subcellular location is the perikaryon. Functionally, photoreceptor that binds cis-retinaldehydes. Contributes to pupillar reflex, photoentrainment and other non-image forming responses to light. May be involved in the optokinetic visual tracking response. May be involved in the regulation of retinal hyaloid vessel growth and regression. In Mus musculus (Mouse), this protein is Melanopsin (Opn4).